A 255-amino-acid polypeptide reads, in one-letter code: DNA repair protein RecO (255 aa).

It belongs to the RecO family.

Its function is as follows. Involved in DNA repair and RecF pathway recombination. This is DNA repair protein RecO from Listeria monocytogenes serotype 4a (strain HCC23).